The chain runs to 333 residues: Glycogenin-1 (333 aa).

T2 is subject to N-acetylthreonine. The UDP site is built by L9, T11, N12, and Y15. UDP-alpha-D-glucose contacts are provided by L9, T11, N12, and Y15. Phosphoserine is present on S44. R77 lines the UDP pocket. UDP-alpha-D-glucose contacts are provided by R77, K86, D102, A103, D104, N133, S134, D160, D163, and Q164. Positions 102, 103, and 104 each coordinate UDP. D102 is a binding site for Mn(2+). D104 provides a ligand contact to Mn(2+). O-linked (Glc...) tyrosine glycosylation occurs at Y195. UDP-binding residues include H212, G215, and K218. H212 is a Mn(2+) binding site. UDP-alpha-D-glucose is bound by residues G215 and K218. The tract at residues 284 to 316 (SDLSFGEAPAAPQPSMSSEERKERWEQGQADYM) is interaction with GYS1. Residues 290 to 316 (EAPAAPQPSMSSEERKERWEQGQADYM) form a disordered region.

Belongs to the glycosyltransferase 8 family. Glycogenin subfamily. Part of the GYS1-GYG1 complex, a heterooctamer composed of a tetramer of GYS1 and 2 dimers of GYG1, where each GYS1 protomer binds to one GYG1 subunit (via GYG1 C-terminus); the GYS1 tetramer may dissociate from GYG1 dimers to continue glycogen polymerization on its own. May also form a heterooctamer complex with GYS2. It depends on Mn(2+) as a cofactor. Self-glycosylated by the transfer of glucose residues from UDP-glucose to itself, forming an alpha-1,4-glycan of around 10 residues attached to Tyr-195. In terms of processing, phosphorylated. Skeletal muscle, heart, to a lesser extent in kidney, lung and brain.

It localises to the cytoplasm. Its subcellular location is the nucleus. It catalyses the reaction L-tyrosyl-[glycogenin] + UDP-alpha-D-glucose = alpha-D-glucosyl-L-tyrosyl-[glycogenin] + UDP + H(+). It carries out the reaction [1,4-alpha-D-glucosyl](n)-L-tyrosyl-[glycogenin] + UDP-alpha-D-glucose = [1,4-alpha-D-glucosyl](n+1)-L-tyrosyl-[glycogenin] + UDP + H(+). It participates in glycan biosynthesis; glycogen biosynthesis. Glycogenin participates in the glycogen biosynthetic process along with glycogen synthase and glycogen branching enzyme. It catalyzes the formation of a short alpha (1,4)-glucosyl chain covalently attached via a glucose 1-O-tyrosyl linkage to internal tyrosine residues and these chains act as primers for the elongation reaction catalyzed by glycogen synthase. The polypeptide is Glycogenin-1 (Mus musculus (Mouse)).